The following is a 337-amino-acid chain: Secreted effector protein EspF(U) (337 aa).

5 repeat units span residues 96-142 (IKPA…AEHG), 143-189 (IQPA…AEHG), 190-236 (IQPA…AEHG), 237-283 (IQPA…AEHG), and 284-330 (IQPA…AEHG). The 5 X 48 AA approximate tandem repeats stretch occupies residues 96 to 330 (IKPARSMAEH…RLMQHLAEHG (235 aa)). Positions 291 to 312 (AEHIPPAPNWPAPTPPVQNEQS) are disordered. Positions 295 to 306 (PPAPNWPAPTPP) are enriched in pro residues.

Belongs to the EspF(U)/TccP family. As to quaternary structure, interacts with host BAIAP2 and host WASL/N-WASP. Can also interact with host proteins BAIAP2L1 and WAS/WASP.

It localises to the secreted. Its subcellular location is the host cytoplasm. Required for efficient pedestal formation in host epithelial cells during infection. Acts as an intermediate between Tir (via host BAIAP2) and host WASL/N-WASP. Directly binds and activates WASL/N-WASP, which stimulates actin polymerization and leads to the formation of actin pedestals at the sites of bacterial adhesion. The chain is Secreted effector protein EspF(U) (espF(U)) from Escherichia coli O157:H7.